A 437-amino-acid polypeptide reads, in one-letter code: Transcriptional modulator WTM1 (437 aa).

One copy of the WD 1 repeat lies at 103 to 144 (YQGETVSKMAYLDKTGETTLLSMSKNGSLAWFKEGIKVPIHI). Threonine 187 carries the post-translational modification Phosphothreonine. Phosphoserine is present on serine 200. WD repeat units lie at residues 221 to 259 (PGTTVTHTVRFFDNHIFASCSDDNILRFWDTRTSDKPIW), 264 to 304 (PKNG…AATT), and 326 to 366 (AGGD…SKYN). Residues 368–404 (DDTIAPPQDATEESQTKSLRFLHKGGSRRSPKQIGRR) form a disordered region. Position 370 is a phosphothreonine (threonine 370). A compositionally biased stretch (basic residues) spans 387–402 (RFLHKGGSRRSPKQIG). Threonine 406 carries the post-translational modification Phosphothreonine.

As to quaternary structure, interacts with KAP122.

Its subcellular location is the cytoplasm. The protein resides in the nucleus. In terms of biological role, transcriptional modulator with roles in meiotic regulation and silencing. Acts either as an adapter to facilitate nuclear import by KAP122 of the RNR2-RNR4 heterodimer, also called beta-beta' subunit, which corresponds to the small subunit of the ribonucleotide reductase (RNR); or as an anchor to retain RNR2-RNR4 in the nucleus. The sequence is that of Transcriptional modulator WTM1 (WTM1) from Saccharomyces cerevisiae (strain ATCC 204508 / S288c) (Baker's yeast).